The sequence spans 237 residues: RING finger protein vilya (237 aa).

The segment at 21–69 adopts an RING-type zinc-finger fold; the sequence is CNSCCALFCDKKHTFFLLACHHVFCERCVKVSAGRTPSDAPIFECSTCR. A disordered region spans residues 172-237; that stretch reads MHRMAQAYRS…IHPPNNSFDL (66 aa). Residues 180 to 195 are compositionally biased toward low complexity; it reads RSRSLTSQSSSSAQRS. Residues 221 to 237 are compositionally biased toward polar residues; it reads RQQITSFIHPPNNSFDL.

In terms of assembly, may interact with itself and with narya and nenya through their RING-type zinc fingers. In terms of tissue distribution, expressed in nurse cell and pro-oocytes (at protein level).

It localises to the chromosome. Functionally, required for the formation of DNA double-strand breaks during meiosis together with narya and nenya. In Drosophila melanogaster (Fruit fly), this protein is RING finger protein vilya.